An 87-amino-acid chain; its full sequence is Small ribosomal subunit protein bS16 (87 aa).

Belongs to the bacterial ribosomal protein bS16 family.

This chain is Small ribosomal subunit protein bS16, found in Nitrosospira multiformis (strain ATCC 25196 / NCIMB 11849 / C 71).